Reading from the N-terminus, the 613-residue chain is Pesticidal crystal-like protein Cry16Aa (613 aa).

This sequence belongs to the delta endotoxin family.

The protein localises to the secreted. In terms of biological role, toxin active on mosquito larvae of the species Aedes aegypti, Culex pipiens and Anopheles stephensi. This is Pesticidal crystal-like protein Cry16Aa (cry16Aa) from Paraclostridium bifermentans (Clostridium bifermentans).